Reading from the N-terminus, the 120-residue chain is Large ribosomal subunit protein uL18 (120 aa).

This sequence belongs to the universal ribosomal protein uL18 family. Part of the 50S ribosomal subunit; part of the 5S rRNA/L5/L18/L25 subcomplex. Contacts the 5S and 23S rRNAs.

Functionally, this is one of the proteins that bind and probably mediate the attachment of the 5S RNA into the large ribosomal subunit, where it forms part of the central protuberance. This chain is Large ribosomal subunit protein uL18, found in Rhodospirillum rubrum (strain ATCC 11170 / ATH 1.1.1 / DSM 467 / LMG 4362 / NCIMB 8255 / S1).